The following is a 718-amino-acid chain: Cyclic-di-AMP phosphodiesterase PgpH (718 aa).

Residues 1 to 17 are Cytoplasmic-facing; it reads MKLAKKWRDWYIESGKK. The helical transmembrane segment at 18 to 38 threads the bilayer; sequence YLFPLLLVCFAVIAYFLVCQM. The Extracellular segment spans residues 39–289; it reads TKPESYNVKL…MLHLLDQKMP (251 aa). The segment covering 112 to 127 has biased composition (basic and acidic residues); sequence QEKDTKNKEKAKKENK. A disordered region spans residues 112 to 140; the sequence is QEKDTKNKEKAKKENKPAPAPTSTEDKLK. The helical transmembrane segment at 290–310 threads the bilayer; sequence VKQYAGFAIFIIALAAILFLY. Over 311-324 the chain is Cytoplasmic; the sequence is TKKQTQPKAKKMQT. Residues 325-345 traverse the membrane as a helical segment; sequence MLIFSSVYLVSLFMLFIILFL. Residues 346-349 lie on the Extracellular side of the membrane; the sequence is ETQN. The next 2 membrane-spanning stretches (helical) occupy residues 350–370 and 371–391; these read IANI…KILL and NEKY…LTFQ. N392 is a topological domain (extracellular). A helical transmembrane segment spans residues 393–413; sequence DATSGITIFILLSGATSVVML. Residues 414–421 lie on the Cytoplasmic side of the membrane; the sequence is RDYSRRSA. The helical transmembrane segment at 422 to 442 threads the bilayer; that stretch reads IMLSGFMVGLINMIYVLLLLL. Over 443-457 the chain is Extracellular; it reads INNSTLLQVSTLMAL. The helical transmembrane segment at 458–478 threads the bilayer; sequence GYAFLGGFGAFILGVGVIPLF. Over 479 to 718 the chain is Cytoplasmic; the sequence is ETIFGLLTTS…QRIQYPDDKD (240 aa). The 143-residue stretch at 511-653 folds into the HD domain; sequence TYHHSMMVAN…INISDSVEAA (143 aa). 3 residues coordinate Mn(2+): H514, H543, and D544. H514 is a binding site for substrate. Substrate contacts are provided by residues 544–547 and 555–556; these read DIGK and VE. Residues H580, H604, and H605 each contribute to the Mn(2+) site. Y631 and D648 together coordinate substrate. Position 648 (D648) interacts with Mn(2+).

This sequence belongs to the PgpH phosphodiesterase family. Mn(2+) is required as a cofactor.

It is found in the cell membrane. It catalyses the reaction 3',3'-c-di-AMP + H2O = 5'-O-phosphonoadenylyl-(3'-&gt;5')-adenosine + H(+). With respect to regulation, c-di-AMP hydrolysis inhibited by ppGpp, without altering c-di-AMP binding. Functionally, a phosphodiesterase (PDE) that hydrolyzes cyclic di-3',5'-adenylate (c-di-AMP); there are at least 2 PDEs for c-di-AMP in this bacteria (this and pdeA), this may be the major PDE for growth in liquid culture. During host infection c-di-AMP is secreted into the host cytoplasm which leads to interferon-beta production and secretion by the host. The cytoplasmic HD domain binds and hydrolyzes c-di-AMP to 5'-pApA; has very low activity against c-di-GMP, does not hydrolyze ppGpp. The polypeptide is Cyclic-di-AMP phosphodiesterase PgpH (Listeria monocytogenes serotype 1/2a (strain 10403S)).